A 145-amino-acid chain; its full sequence is Large ribosomal subunit protein bL17 (145 aa).

The protein belongs to the bacterial ribosomal protein bL17 family. Part of the 50S ribosomal subunit. Contacts protein L32.

This Francisella tularensis subsp. holarctica (strain FTNF002-00 / FTA) protein is Large ribosomal subunit protein bL17.